The sequence spans 334 residues: Cysteine and histidine-rich domain-containing protein 1 (334 aa).

Zn(2+) is bound by residues cysteine 5, cysteine 10, cysteine 24, histidine 27, cysteine 42, cysteine 43, cysteine 59, histidine 64, cysteine 156, cysteine 161, cysteine 175, histidine 178, cysteine 193, cysteine 194, cysteine 210, and histidine 215. 2 consecutive CHORD domains span residues 5-64 (CYNR…KGQH) and 156-215 (CKNG…KGTH). The CS domain occupies 226-315 (VVPCRHDWHQ…AEFMTWARLE (90 aa)).

Regulates centrosome duplication. The sequence is that of Cysteine and histidine-rich domain-containing protein 1 (chordc1) from Xenopus laevis (African clawed frog).